Reading from the N-terminus, the 689-residue chain is Sodium-dependent phosphate transport protein 2B (689 aa).

Residues 1-41 form a disordered region; the sequence is MAPWPELGDAQPNPDKYLEGAAGQQPTAPDKSKETNKNNTE. At 1–100 the chain is on the cytoplasmic side; that stretch reads MAPWPELGDA…LCVFQGIGRL (100 aa). A helical membrane pass occupies residues 101–121; that stretch reads ILLLGFLYFFVCSLDILSSAF. Over 122 to 135 the chain is Extracellular; it reads QLVGGKMAGQFFSN. Residues 136-156 form a helical membrane-spanning segment; the sequence is SSIMSNPLLGLVIGVLVTVLV. Residues 157–212 are Cytoplasmic-facing; that stretch reads QSSSTSTSIVVSMVSSSLLTVRAAIPIIMGANIGTSITNTIVALMQVGDRSEFRRA. Residues 213-233 form a helical membrane-spanning segment; it reads FAGATVHDFFNWLSVLVLLPV. Residues 234–362 lie on the Extracellular side of the membrane; the sequence is EVATHYLEII…FVNFHLPDLA (129 aa). Asn-294, Asn-307, and Asn-320 each carry an N-linked (GlcNAc...) asparagine glycan. A disulfide bond links Cys-302 and Cys-349. A helical membrane pass occupies residues 363 to 383; sequence VGTILLILSLLVLCGCLIMIV. Over 384–407 the chain is Cytoplasmic; the sequence is KILGSVLKGQVATVIKKTINTDFP. The helical transmembrane segment at 408–428 threads the bilayer; it reads FPFAWLTGYLAILVGAGMTFI. The Extracellular segment spans residues 429–485; it reads VQSSSVFTSALTPLIGIGVITIERAYPLTLGSNIGTTTTAILAALASPGNALRSSLQ. A helical membrane pass occupies residues 486-506; the sequence is IALCHFFFNISGILLWYPIPF. The Cytoplasmic segment spans residues 507-525; the sequence is TRLPIRMAKGLGNISAKYR. A helical membrane pass occupies residues 526–546; that stretch reads WFAVFYLIIFFFLIPLTVFGL. The Extracellular portion of the chain corresponds to 547-552; the sequence is SLAGWR. The helical transmembrane segment at 553-573 threads the bilayer; that stretch reads VLVGVGVPVVFIIILVLCLRL. Residues 574–687 lie on the Cytoplasmic side of the membrane; the sequence is LQSRCPRVLP…PASDSKTECT (114 aa).

The protein belongs to the SLC34A transporter family.

The protein localises to the apical cell membrane. The enzyme catalyses 3 Na(+)(out) + phosphate(out) = 3 Na(+)(in) + phosphate(in). In terms of biological role, involved in actively transporting phosphate into cells via Na(+) cotransport. This Pongo abelii (Sumatran orangutan) protein is Sodium-dependent phosphate transport protein 2B (SLC34A2).